The chain runs to 89 residues: Large ribosomal subunit protein eL34 (89 aa).

Residues 45-71 (GIPRGRPVEMRKLPKTKKRPERPMPHL) are disordered.

This sequence belongs to the eukaryotic ribosomal protein eL34 family. As to quaternary structure, part of the 50S ribosomal subunit.

This is Large ribosomal subunit protein eL34 from Pyrococcus furiosus (strain ATCC 43587 / DSM 3638 / JCM 8422 / Vc1).